The sequence spans 188 residues: Probable RNA 2'-phosphotransferase (188 aa).

Belongs to the KptA/TPT1 family.

Removes the 2'-phosphate from RNA via an intermediate in which the phosphate is ADP-ribosylated by NAD followed by a presumed transesterification to release the RNA and generate ADP-ribose 1''-2''-cyclic phosphate (APPR&gt;P). May function as an ADP-ribosylase. The polypeptide is Probable RNA 2'-phosphotransferase (Pseudomonas savastanoi pv. phaseolicola (strain 1448A / Race 6) (Pseudomonas syringae pv. phaseolicola (strain 1448A / Race 6))).